Reading from the N-terminus, the 477-residue chain is MQVLHVCSEMFPLLKTGGLADVIGALPAAQIADGVDVRVLLPGFPDIRRGIPDAHVVSRRDTFAGKISLLFGHYNGVGIYLIDAPHLYERPGSPYHDTNLYAYTDNVLRFALLGWVGCEMACGLDPFWRPDVVHAHDWHAGLAPAYLAARGRPAKSVFTVHNLAYQGMFYAKHMDDIELPWSFFNMHGLEFNGQLSFLKAGLYYADHITAVSPTYAREITEPQFAYGMEGLLRQRHLEGRLSGILNGVDEKIWNPESDLLLASRYTRDTLEEKAENKRQLQIAMGLKVNDKVPLFAVVSRLTNQKGLDLVLEALPGLLEQGGQLALLGAGDPVLQEGFLAAAAEHPGQVGVQIGYHEAFSHRIMGGADVILVPSRFEPCGLTQLYGLKYGTLPLVRRTGGLADTVSDSSLENLADGIASGFVFEDSNAWSLLRAIRRAFVLWSRPSLWRFVQRQAMAMDFSWQVAAKSYRELYYRLK.

Lys15 is a binding site for ADP-alpha-D-glucose.

Belongs to the glycosyltransferase 1 family. Bacterial/plant glycogen synthase subfamily.

It carries out the reaction [(1-&gt;4)-alpha-D-glucosyl](n) + ADP-alpha-D-glucose = [(1-&gt;4)-alpha-D-glucosyl](n+1) + ADP + H(+). It functions in the pathway glycan biosynthesis; glycogen biosynthesis. In terms of biological role, synthesizes alpha-1,4-glucan chains using ADP-glucose. This chain is Glycogen synthase (glgA), found in Salmonella typhimurium (strain LT2 / SGSC1412 / ATCC 700720).